A 234-amino-acid chain; its full sequence is Isoprenyl transferase (234 aa).

D13 is a catalytic residue. D13 provides a ligand contact to Mg(2+). Substrate-binding positions include 14–17 (GNGR), W18, R26, H30, and 58–60 (STE). N61 functions as the Proton acceptor in the catalytic mechanism. Residues W62, R64, R180, and 186–188 (RLS) contribute to the substrate site. E199 is a binding site for Mg(2+).

Belongs to the UPP synthase family. In terms of assembly, homodimer. Requires Mg(2+) as cofactor.

Its function is as follows. Catalyzes the condensation of isopentenyl diphosphate (IPP) with allylic pyrophosphates generating different type of terpenoids. The polypeptide is Isoprenyl transferase (Helicobacter pylori (strain J99 / ATCC 700824) (Campylobacter pylori J99)).